The sequence spans 236 residues: Thylakoid lumenal 17.4 kDa protein, chloroplastic (236 aa).

Pentapeptide repeat domains follow at residues 124–163 and 169–208; these read TNLKGKTLSAALMVGAKFDGADMTEVVMSKAYAVEASFKG and AVIDRVNFGKSNLKGAVFRNTVLSGSTFEEANLEDVVFED.

Interacts in vitro with LTO1.

It is found in the plastid. It localises to the chloroplast thylakoid lumen. The chain is Thylakoid lumenal 17.4 kDa protein, chloroplastic from Arabidopsis thaliana (Mouse-ear cress).